Reading from the N-terminus, the 223-residue chain is Peptidyl-tRNA hydrolase (223 aa).

Position 16 (Tyr-16) interacts with tRNA. His-21 serves as the catalytic Proton acceptor. 3 residues coordinate tRNA: Phe-67, Asn-69, and Asn-113.

It belongs to the PTH family. Monomer.

The protein localises to the cytoplasm. The enzyme catalyses an N-acyl-L-alpha-aminoacyl-tRNA + H2O = an N-acyl-L-amino acid + a tRNA + H(+). In terms of biological role, hydrolyzes ribosome-free peptidyl-tRNAs (with 1 or more amino acids incorporated), which drop off the ribosome during protein synthesis, or as a result of ribosome stalling. Its function is as follows. Catalyzes the release of premature peptidyl moieties from peptidyl-tRNA molecules trapped in stalled 50S ribosomal subunits, and thus maintains levels of free tRNAs and 50S ribosomes. This chain is Peptidyl-tRNA hydrolase, found in Helicobacter hepaticus (strain ATCC 51449 / 3B1).